A 99-amino-acid chain; its full sequence is Nucleoid-associated protein EbfC (99 aa).

This sequence belongs to the YbaB/EbfC family. Homodimer. Can form tetramers and octamers in solution.

The protein localises to the cytoplasm. Its subcellular location is the nucleoid. In terms of biological role, binds to DNA and alters its conformation. May be involved in global regulation of gene expression. Binds specifically and non-specifically to DNA, preferentially to the 4 bp broken palindrome 5'-GTnAC-3'. Affects expression of a wide variety of genes, encoding both structural and metabolic proteins. This chain is Nucleoid-associated protein EbfC, found in Borreliella burgdorferi (strain ATCC 35210 / DSM 4680 / CIP 102532 / B31) (Borrelia burgdorferi).